The following is a 516-amino-acid chain: Polyprenol-phosphate-mannose--protein mannosyltransferase (516 aa).

Positions 1–11 (MTALDTDTPTA) are enriched in polar residues. The segment at 1–23 (MTALDTDTPTAGRSAPLISPGPV) is disordered. Transmembrane regions (helical) follow at residues 113–133 (YNGL…VMLV), 143–163 (STLV…SFVS), 166–186 (TALL…CLMV), 234–254 (WSGL…DAIA), 275–295 (AAYV…APWF), 384–404 (VMLV…GWAL), 413–433 (WRYG…FADI), 437–457 (MYFF…ALIL), and 473–493 (LGLL…AWMY).

It belongs to the glycosyltransferase 39 family.

It localises to the cell membrane. Its pathway is protein modification; protein glycosylation. In terms of biological role, protein O-mannosyltransferase that catalyzes the transfer of a single mannose residue from a polyprenol phospho-mannosyl lipidic donor to the hydroxyl group of selected serine and threonine residues in acceptor proteins. Involved in DNA conjugation, in at least the recipient strain. The sequence is that of Polyprenol-phosphate-mannose--protein mannosyltransferase (pmt) from Mycolicibacterium smegmatis (strain MKD8) (Mycobacterium smegmatis).